The chain runs to 1294 residues: von Willebrand factor A domain-containing protein 3B (1294 aa).

Residues 508–684 (CIYILIDTSH…EDLTLLVKEM (177 aa)) enclose the VWFA domain. Disordered stretches follow at residues 732–754 (CAKP…KGPW), 778–803 (RSQM…SSRR), 1012–1036 (APGE…DPLK), and 1193–1247 (DTQD…PRTA). A compositionally biased stretch (polar residues) spans 738-748 (DVDSTQTSSLN). A compositionally biased stretch (low complexity) spans 778–787 (RSQMSSLRSS). Basic and acidic residues predominate over residues 1193–1202 (DTQDSREPRR). The segment covering 1203–1212 (EKPRRKKRPA) has biased composition (basic residues). Over residues 1213–1236 (KQPLQQAAPSDSDGSSHGISSHGS) the composition is skewed to low complexity.

The protein resides in the cytoplasm. In Homo sapiens (Human), this protein is von Willebrand factor A domain-containing protein 3B (VWA3B).